The following is a 364-amino-acid chain: Dual-specificity RNA methyltransferase RlmN (364 aa).

E91 functions as the Proton acceptor in the catalytic mechanism. A Radical SAM core domain is found at 97–333 (ESDRGTLCIS…VTVRKTRGDD (237 aa)). An intrachain disulfide couples C104 to C338. [4Fe-4S] cluster is bound by residues C111, C115, and C118. S-adenosyl-L-methionine contacts are provided by residues 164–165 (GE), S196, 218–220 (SLH), and N295. C338 functions as the S-methylcysteine intermediate in the catalytic mechanism.

Belongs to the radical SAM superfamily. RlmN family. [4Fe-4S] cluster serves as cofactor.

The protein resides in the cytoplasm. The catalysed reaction is adenosine(2503) in 23S rRNA + 2 reduced [2Fe-2S]-[ferredoxin] + 2 S-adenosyl-L-methionine = 2-methyladenosine(2503) in 23S rRNA + 5'-deoxyadenosine + L-methionine + 2 oxidized [2Fe-2S]-[ferredoxin] + S-adenosyl-L-homocysteine. The enzyme catalyses adenosine(37) in tRNA + 2 reduced [2Fe-2S]-[ferredoxin] + 2 S-adenosyl-L-methionine = 2-methyladenosine(37) in tRNA + 5'-deoxyadenosine + L-methionine + 2 oxidized [2Fe-2S]-[ferredoxin] + S-adenosyl-L-homocysteine. In terms of biological role, specifically methylates position 2 of adenine 2503 in 23S rRNA and position 2 of adenine 37 in tRNAs. m2A2503 modification seems to play a crucial role in the proofreading step occurring at the peptidyl transferase center and thus would serve to optimize ribosomal fidelity. This Neisseria meningitidis serogroup B (strain ATCC BAA-335 / MC58) protein is Dual-specificity RNA methyltransferase RlmN.